The chain runs to 295 residues: Ribosomal RNA small subunit methyltransferase A (295 aa).

S-adenosyl-L-methionine is bound by residues Asn33, Val35, Gly60, Glu81, Asp111, and Asn129.

The protein belongs to the class I-like SAM-binding methyltransferase superfamily. rRNA adenine N(6)-methyltransferase family. RsmA subfamily.

The protein resides in the cytoplasm. It catalyses the reaction adenosine(1518)/adenosine(1519) in 16S rRNA + 4 S-adenosyl-L-methionine = N(6)-dimethyladenosine(1518)/N(6)-dimethyladenosine(1519) in 16S rRNA + 4 S-adenosyl-L-homocysteine + 4 H(+). Specifically dimethylates two adjacent adenosines (A1518 and A1519) in the loop of a conserved hairpin near the 3'-end of 16S rRNA in the 30S particle. May play a critical role in biogenesis of 30S subunits. In Corynebacterium diphtheriae (strain ATCC 700971 / NCTC 13129 / Biotype gravis), this protein is Ribosomal RNA small subunit methyltransferase A.